The chain runs to 566 residues: Glucose-6-phosphate isomerase (566 aa).

Residue Glu-374 is the Proton donor of the active site. Active-site residues include His-405 and Lys-529.

This sequence belongs to the GPI family.

The protein resides in the cytoplasm. It carries out the reaction alpha-D-glucose 6-phosphate = beta-D-fructose 6-phosphate. It participates in carbohydrate biosynthesis; gluconeogenesis. The protein operates within carbohydrate degradation; glycolysis; D-glyceraldehyde 3-phosphate and glycerone phosphate from D-glucose: step 2/4. Its function is as follows. Catalyzes the reversible isomerization of glucose-6-phosphate to fructose-6-phosphate. This is Glucose-6-phosphate isomerase from Bifidobacterium longum (strain NCC 2705).